Here is a 507-residue protein sequence, read N- to C-terminus: ATP synthase subunit alpha, chloroplastic (507 aa).

170-177 is an ATP binding site; the sequence is GDRQTGKT.

Belongs to the ATPase alpha/beta chains family. As to quaternary structure, F-type ATPases have 2 components, CF(1) - the catalytic core - and CF(0) - the membrane proton channel. CF(1) has five subunits: alpha(3), beta(3), gamma(1), delta(1), epsilon(1). CF(0) has four main subunits: a, b, b' and c.

Its subcellular location is the plastid. The protein resides in the chloroplast thylakoid membrane. It catalyses the reaction ATP + H2O + 4 H(+)(in) = ADP + phosphate + 5 H(+)(out). Its function is as follows. Produces ATP from ADP in the presence of a proton gradient across the membrane. The alpha chain is a regulatory subunit. The sequence is that of ATP synthase subunit alpha, chloroplastic from Solanum bulbocastanum (Wild potato).